Consider the following 375-residue polypeptide: Chaperone protein DnaJ (375 aa).

The region spanning Asp-6–Gly-71 is the J domain. A CR-type zinc finger spans residues Gly-132–Gln-214. Residues Cys-145, Cys-148, Cys-162, Cys-165, Cys-188, Cys-191, Cys-202, and Cys-205 each contribute to the Zn(2+) site. CXXCXGXG motif repeat units follow at residues Cys-145–Gly-152, Cys-162–Gly-169, Cys-188–Gly-195, and Cys-202–Gly-209. The segment at Pro-222–Gly-243 is disordered.

Belongs to the DnaJ family. As to quaternary structure, homodimer. The cofactor is Zn(2+).

The protein localises to the cytoplasm. Its function is as follows. Participates actively in the response to hyperosmotic and heat shock by preventing the aggregation of stress-denatured proteins and by disaggregating proteins, also in an autonomous, DnaK-independent fashion. Unfolded proteins bind initially to DnaJ; upon interaction with the DnaJ-bound protein, DnaK hydrolyzes its bound ATP, resulting in the formation of a stable complex. GrpE releases ADP from DnaK; ATP binding to DnaK triggers the release of the substrate protein, thus completing the reaction cycle. Several rounds of ATP-dependent interactions between DnaJ, DnaK and GrpE are required for fully efficient folding. Also involved, together with DnaK and GrpE, in the DNA replication of plasmids through activation of initiation proteins. The chain is Chaperone protein DnaJ from Halothermothrix orenii (strain H 168 / OCM 544 / DSM 9562).